The following is a 95-amino-acid chain: Aspartyl/glutamyl-tRNA(Asn/Gln) amidotransferase subunit C (95 aa).

Belongs to the GatC family. In terms of assembly, heterotrimer of A, B and C subunits.

It carries out the reaction L-glutamyl-tRNA(Gln) + L-glutamine + ATP + H2O = L-glutaminyl-tRNA(Gln) + L-glutamate + ADP + phosphate + H(+). The catalysed reaction is L-aspartyl-tRNA(Asn) + L-glutamine + ATP + H2O = L-asparaginyl-tRNA(Asn) + L-glutamate + ADP + phosphate + 2 H(+). Allows the formation of correctly charged Asn-tRNA(Asn) or Gln-tRNA(Gln) through the transamidation of misacylated Asp-tRNA(Asn) or Glu-tRNA(Gln) in organisms which lack either or both of asparaginyl-tRNA or glutaminyl-tRNA synthetases. The reaction takes place in the presence of glutamine and ATP through an activated phospho-Asp-tRNA(Asn) or phospho-Glu-tRNA(Gln). The protein is Aspartyl/glutamyl-tRNA(Asn/Gln) amidotransferase subunit C of Geotalea uraniireducens (strain Rf4) (Geobacter uraniireducens).